Reading from the N-terminus, the 122-residue chain is Large ribosomal subunit protein uL14 (122 aa).

Belongs to the universal ribosomal protein uL14 family. As to quaternary structure, part of the 50S ribosomal subunit. Forms a cluster with proteins L3 and L19. In the 70S ribosome, L14 and L19 interact and together make contacts with the 16S rRNA in bridges B5 and B8.

Its function is as follows. Binds to 23S rRNA. Forms part of two intersubunit bridges in the 70S ribosome. This Halalkalibacterium halodurans (strain ATCC BAA-125 / DSM 18197 / FERM 7344 / JCM 9153 / C-125) (Bacillus halodurans) protein is Large ribosomal subunit protein uL14.